A 200-amino-acid polypeptide reads, in one-letter code: Proteasome subunit beta 2 (200 aa).

Position 1 (Met1) is a propeptide, removed in mature form; by autocatalysis. Thr2 serves as the catalytic Nucleophile.

The protein belongs to the peptidase T1B family. The 20S proteasome core is composed of 14 alpha and 14 beta subunits that assemble into four stacked heptameric rings, resulting in a barrel-shaped structure. The two inner rings, each composed of seven catalytic beta subunits, are sandwiched by two outer rings, each composed of seven alpha subunits. The catalytic chamber with the active sites is on the inside of the barrel. Has a gated structure, the ends of the cylinder being occluded by the N-termini of the alpha-subunits. Is capped at one or both ends by the proteasome regulatory ATPase, PAN.

The protein resides in the cytoplasm. The catalysed reaction is Cleavage of peptide bonds with very broad specificity.. Its activity is regulated as follows. The formation of the proteasomal ATPase PAN-20S proteasome complex, via the docking of the C-termini of PAN into the intersubunit pockets in the alpha-rings, triggers opening of the gate for substrate entry. Interconversion between the open-gate and close-gate conformations leads to a dynamic regulation of the 20S proteasome proteolysis activity. Component of the proteasome core, a large protease complex with broad specificity involved in protein degradation. The polypeptide is Proteasome subunit beta 2 (Pyrobaculum islandicum (strain DSM 4184 / JCM 9189 / GEO3)).